The primary structure comprises 111 residues: MTKSIYIIIGYMLHDEEFFYFFFISFYTLWIVFFLLHLSFFSTLSFGIFHDFDTDVYIKVGNYILHFLELSKNSNLLKNSSEMLKHFRLASLMYMYVYTQMICPSLLGIRN.

The helical transmembrane segment at 18-41 (FFYFFFISFYTLWIVFFLLHLSFF) threads the bilayer.

The protein localises to the membrane. This is an uncharacterized protein from Saccharomyces cerevisiae (strain ATCC 204508 / S288c) (Baker's yeast).